The primary structure comprises 315 residues: Initiation factor TFIIB homolog (315 aa).

It belongs to the asfivirus C315R family.

Its function is as follows. Putative initation factor. The polypeptide is Initiation factor TFIIB homolog (African swine fever virus (strain Badajoz 1971 Vero-adapted) (Ba71V)).